Reading from the N-terminus, the 825-residue chain is Thioredoxin domain-containing protein 16 (825 aa).

Residues 1 to 27 form the signal peptide; that stretch reads MFSGFNVFRVGISFVIMCIFYMPTVNS. The Thioredoxin domain maps to 392 to 495; sequence LTVELTEETF…EDLLKFIQLN (104 aa). Residues cysteine 449 and cysteine 456 are joined by a disulfide bond. N-linked (GlcNAc...) asparagine glycosylation occurs at asparagine 460. A disordered region spans residues 762–787; that stretch reads RKVPKCMKETDVQENDKEQHEDKSAV. Over residues 767–787 the composition is skewed to basic and acidic residues; it reads CMKETDVQENDKEQHEDKSAV. Residues 816–819 carry the Mediates endoplasmic reticulum retention motif; the sequence is DKEL.

Interacts with FOXRED2. In terms of processing, glycosylated.

Its subcellular location is the secreted. The protein localises to the endoplasmic reticulum lumen. This Homo sapiens (Human) protein is Thioredoxin domain-containing protein 16.